A 333-amino-acid chain; its full sequence is MSSAPPGPAAPRLCCMEKGPDGYGFHLHGEKGKPGQYIRLVEAGSPAERSGLRAGDRLLEVDGTNVERESHQQVVERIRAAAGAVRLLVVQPQPEEQPPKTHSDPDGEAQREPPAAETPAAERSGPEERELRPRLCRIKKGPNGYGFNLHSEKSRPGQYVRAVDPDSPAEAAGLRAQDRIVEVNGTSVEGKQHADVVAAIKAGGDETKLLVVGVLADEFFKKCRVVPSEAHLAGPLPEPMANGDVEKENGGEPRLNSVSERPPSPALATSPEGSETHSEPDTQEGDKRSSAPSSLLDLDIPLAVAKERAHQKRTSKRAPQMDWSKKNELFSNL.

One can recognise a PDZ 1 domain in the interval 13–93; that stretch reads LCCMEKGPDG…AVRLLVVQPQ (81 aa). Disordered stretches follow at residues 90 to 164 and 232 to 333; these read VQPQ…RAVD and LAGP…FSNL. Basic and acidic residues predominate over residues 97 to 111; that stretch reads QPPKTHSDPDGEAQR. Residues 112–122 are compositionally biased toward low complexity; that stretch reads EPPAAETPAAE. Over residues 124-133 the composition is skewed to basic and acidic residues; that stretch reads SGPEERELRP. The PDZ 2 domain maps to 135–215; it reads LCRIKKGPNG…ETKLLVVGVL (81 aa). Basic and acidic residues-rich tracts occupy residues 274-289 and 323-333; these read SETHSEPDTQEGDKRS and WSKKNELFSNL.

It localises to the endomembrane system. The protein localises to the cell projection. It is found in the filopodium. The protein resides in the ruffle. Its subcellular location is the microvillus. Scaffold protein that connects plasma membrane proteins with members of the ezrin/moesin/radixin family and thereby helps to link them to the actin cytoskeleton and to regulate their surface expression. Was first known to play a role in the regulation of the activity and subcellular location of SLC9A3. May enhance Wnt signaling. This Gallus gallus (Chicken) protein is Na(+)/H(+) exchange regulatory cofactor NHE-RF1 (NHERF1).